The sequence spans 462 residues: MAVSLWQQCIGRLQDELSAQQFSMWIRPLQAQMDGDTLVLYAPNRFVLDWVRDKYINIINQFFTEQMGSDAPKLRFDIGSRPSAPRPVQATAAVERPKFEQNTKPAKTSFNVNSPEPAMAANHRSNINRTYQFENFVEGKSNQLGKAAAMQVAENPGGAYNPLFLYGGTGLGKTHLLHAVGNGIIKNNPNAKVVYMHSERFVQDMVKALQNNAIEEFKRYYRSVDALFIDDIQFFANKDRSQEEFFHTFNALLEGNHQIILTSDKYPKEIDGVEDRLKSRFGWGLTVAIEPPELETRVAILMRKAQESGINLPDEVAFFIAKRLRSNVRELEGALNRVIANANFTGRPITIDFVREALRDLLALQEKLVTIDNIQKTVAEYYKIKMADMLSKRRSRSVARPRQVAMALSKELTNHSLPEIGDAFGGRDHTTVLHACRKIAQLREESHDTKEDYANLIRTLSS.

A domain I, interacts with DnaA modulators region spans residues 1 to 84 (MAVSLWQQCI…RFDIGSRPSA (84 aa)). The segment at 84–125 (APRPVQATAAVERPKFEQNTKPAKTSFNVNSPEPAMAANHRS) is domain II. Residues 126 to 342 (NINRTYQFEN…GALNRVIANA (217 aa)) form a domain III, AAA+ region region. The ATP site is built by Gly170, Gly172, Lys173, and Thr174. A domain IV, binds dsDNA region spans residues 343 to 462 (NFTGRPITID…YANLIRTLSS (120 aa)).

The protein belongs to the DnaA family. As to quaternary structure, oligomerizes as a right-handed, spiral filament on DNA at oriC.

The protein resides in the cytoplasm. Its function is as follows. Plays an essential role in the initiation and regulation of chromosomal replication. ATP-DnaA binds to the origin of replication (oriC) to initiate formation of the DNA replication initiation complex once per cell cycle. Binds the DnaA box (a 9 base pair repeat at the origin) and separates the double-stranded (ds)DNA. Forms a right-handed helical filament on oriC DNA; dsDNA binds to the exterior of the filament while single-stranded (ss)DNA is stabiized in the filament's interior. The ATP-DnaA-oriC complex binds and stabilizes one strand of the AT-rich DNA unwinding element (DUE), permitting loading of DNA polymerase. After initiation quickly degrades to an ADP-DnaA complex that is not apt for DNA replication. Binds acidic phospholipids. The chain is Chromosomal replication initiator protein DnaA from Shewanella sediminis (strain HAW-EB3).